Reading from the N-terminus, the 484-residue chain is Cobyric acid synthase (484 aa).

The region spanning 248–435 (VLKVIVPVLP…LHGLFEGSQS (188 aa)) is the GATase cobBQ-type domain. The active-site Nucleophile is the Cys-329. His-427 is an active-site residue.

The protein belongs to the CobB/CobQ family. CobQ subfamily.

Its pathway is cofactor biosynthesis; adenosylcobalamin biosynthesis. In terms of biological role, catalyzes amidations at positions B, D, E, and G on adenosylcobyrinic A,C-diamide. NH(2) groups are provided by glutamine, and one molecule of ATP is hydrogenolyzed for each amidation. The chain is Cobyric acid synthase from Pseudomonas putida (strain GB-1).